A 360-amino-acid chain; its full sequence is Popeye domain-containing protein 1 (360 aa).

Over 1–48 (MNYTESSPLRESTAIGFTPELESIIPVPSNKTTCENWREIHHLVFHVA) the chain is Extracellular. N-linked (GlcNAc...) asparagine glycans are attached at residues asparagine 2 and asparagine 30. Residues 49 to 69 (NICFAVGLVIPTTLHLHMIFL) traverse the membrane as a helical segment. Arginine 70 is a topological domain (cytoplasmic). A helical membrane pass occupies residues 71–91 (GMLTLGCTLYIVWATLYRCAL). Residue aspartate 92 is a topological domain, extracellular. Residues 93 to 113 (IMIWNSVFLGVNILHLSYLLY) traverse the membrane as a helical segment. The segment at 93–115 (IMIWNSVFLGVNILHLSYLLYKK) is required for interaction with CAV3. Over 114-360 (KKRPVKIEKE…PNTLKVHQLP (247 aa)) the chain is Cytoplasmic. A required for interaction with KCNK2 region spans residues 136–186 (RVPPDLFRRLTGQFCMIQTLKKGQTYAAEDKTSVDDRLSILLKGKMKVSYR). Serine 295 and serine 318 each carry phosphoserine. The segment at 317–360 (SSLHVSSPHQRASAKMKPIEEGAEDDDDVFEPASPNTLKVHQLP) is disordered. Residues 337–346 (EGAEDDDDVF) show a composition bias toward acidic residues. The segment covering 350 to 360 (SPNTLKVHQLP) has biased composition (polar residues).

Belongs to the popeye family. As to quaternary structure, homodimer. Homodimerization requires the C-terminus cytoplasmic region. Interacts (via the C-terminus cytoplasmic tail) with TJP1. Interacts (via the C-terminus cytoplasmic tail) with ARHGEF25/GEFT (via the DH domain). Interacts (via the C-terminus cytoplasmic tail) with VAMP3. Interacts with KCNK2; the interaction enhances KCNK2 surface expression and is inhibited by cAMP. Interacts with CAV3. Expressed in epithelial cells (at protein level). Expressed in fetal and adult heart and skeletal muscle.

The protein resides in the lateral cell membrane. It localises to the cell junction. The protein localises to the tight junction. It is found in the membrane. Its subcellular location is the cell membrane. The protein resides in the sarcolemma. It localises to the caveola. Functionally, cell adhesion molecule involved in the establishment and/or maintenance of cell integrity. Involved in the formation and regulation of the tight junction (TJ) paracellular permeability barrier in epithelial cells. Plays a role in VAMP3-mediated vesicular transport and recycling of different receptor molecules through its interaction with VAMP3. Plays a role in the regulation of cell shape and movement by modulating the Rho-family GTPase activity through its interaction with ARHGEF25/GEFT. Induces primordial adhesive contact and aggregation of epithelial cells in a Ca(2+)-independent manner. Also involved in striated muscle regeneration and repair and in the regulation of cell spreading. Important for the maintenance of cardiac function. Plays a regulatory function in heart rate dynamics mediated, at least in part, through cAMP-binding and, probably, by increasing cell surface expression of the potassium channel KCNK2 and enhancing current density. Is also a caveolae-associated protein important for the preservation of caveolae structural and functional integrity as well as for heart protection against ischemia injury. The protein is Popeye domain-containing protein 1 of Homo sapiens (Human).